The following is an 85-amino-acid chain: U4-theraphotoxin-Hhn1a (85 aa).

Residues 1–22 (MKMTLIAILTCAAVLVLHITAA) form the signal peptide. The propeptide occupies 23–48 (EELEAESQLMEVGMPDTELEAVDEER). 3 disulfides stabilise this stretch: Cys52–Cys66, Cys56–Cys77, and Cys71–Cys82.

Belongs to the neurotoxin 12 (Hwtx-2) family. 02 (Hwtx-2) subfamily. In terms of assembly, monomer. In terms of tissue distribution, expressed by the venom gland.

The protein localises to the secreted. Neurotoxin active on both insects and mammals. This Cyriopagopus hainanus (Chinese bird spider) protein is U4-theraphotoxin-Hhn1a.